Here is a 174-residue protein sequence, read N- to C-terminus: Ribosome maturation factor RimM (174 aa).

Residues 98–171 (EDEFYFHEII…KIKIHVMEGL (74 aa)) enclose the PRC barrel domain.

Belongs to the RimM family. As to quaternary structure, binds ribosomal protein uS19.

The protein resides in the cytoplasm. Its function is as follows. An accessory protein needed during the final step in the assembly of 30S ribosomal subunit, possibly for assembly of the head region. Essential for efficient processing of 16S rRNA. May be needed both before and after RbfA during the maturation of 16S rRNA. It has affinity for free ribosomal 30S subunits but not for 70S ribosomes. The polypeptide is Ribosome maturation factor RimM (Bacillus velezensis (strain DSM 23117 / BGSC 10A6 / LMG 26770 / FZB42) (Bacillus amyloliquefaciens subsp. plantarum)).